A 382-amino-acid chain; its full sequence is Lycopene beta-cyclase (382 aa).

Residue 6–36 (DLILVGAGLANGLIALRLQQQQPDMRILLID) participates in NAD(+) binding.

It belongs to the lycopene cyclase family. Requires FAD as cofactor.

The protein localises to the cell inner membrane. It catalyses the reaction a carotenoid psi-end group = a carotenoid beta-end derivative. It carries out the reaction all-trans-lycopene = gamma-carotene. The catalysed reaction is gamma-carotene = all-trans-beta-carotene. The enzyme catalyses all-trans-neurosporene = beta-zeacarotene. It catalyses the reaction beta-zeacarotene = 7,8-dihydro-beta-carotene. It participates in carotenoid biosynthesis; beta-carotene biosynthesis. Activity is increased in the presence of NAD(P)H. NADPH is not involved directly in the cyclization reaction, but must play an indirect role, e.g. as an allosteric activator. In terms of biological role, catalyzes the double cyclization reaction which converts lycopene to beta-carotene. Also catalyzes the double cyclization reaction which converts neurosporene to 7,8-dihydro-beta-carotene via monocyclic beta-zeacarotene. May also convert zeta-carotene to bicyclic 7,8,7',8'-tetrahydro-beta-carotene. The chain is Lycopene beta-cyclase from Pantoea ananas (Erwinia uredovora).